A 191-amino-acid polypeptide reads, in one-letter code: Corticoliberin (191 aa).

Positions 1–24 (MRLPLLVSAGVLLVALLPCPPCRA) are cleaved as a signal peptide. Residues 25–148 (LLSRGPVLGA…RQEAPERERR (124 aa)) constitute a propeptide that is removed on maturation. The tract at residues 115-153 (PLPRRPLDSPSGPAERGAENALSSRQEAPERERRSEEPP) is disordered. Positions 141–151 (EAPERERRSEE) are enriched in basic and acidic residues. The residue at position 189 (Ile-189) is an Isoleucine amide.

It belongs to the sauvagine/corticotropin-releasing factor/urotensin I family. In terms of assembly, interacts (via C-terminus) with CRFR1 (via N-terminal extracellular domain). Produced by the hypothalamus.

Its subcellular location is the secreted. Hormone regulating the release of corticotropin from pituitary gland. Induces NLRP6 in intestinal epithelial cells, hence may influence gut microbiota profile. This Sus scrofa (Pig) protein is Corticoliberin (CRH).